The following is a 605-amino-acid chain: DNA mismatch repair protein MutL (605 aa).

It belongs to the DNA mismatch repair MutL/HexB family.

This protein is involved in the repair of mismatches in DNA. It is required for dam-dependent methyl-directed DNA mismatch repair. May act as a 'molecular matchmaker', a protein that promotes the formation of a stable complex between two or more DNA-binding proteins in an ATP-dependent manner without itself being part of a final effector complex. This Exiguobacterium sp. (strain ATCC BAA-1283 / AT1b) protein is DNA mismatch repair protein MutL.